The sequence spans 307 residues: Ornithine carbamoyltransferase (307 aa).

Residues 50–53 (STRT), glutamine 77, arginine 101, and 128–131 (HPCQ) contribute to the carbamoyl phosphate site. Residues asparagine 160, aspartate 224, and 228 to 229 (SM) contribute to the L-ornithine site. Carbamoyl phosphate contacts are provided by residues 264–265 (CL) and arginine 292.

The protein belongs to the aspartate/ornithine carbamoyltransferase superfamily. OTCase family. As to quaternary structure, homotrimer.

The protein localises to the cytoplasm. It carries out the reaction carbamoyl phosphate + L-ornithine = L-citrulline + phosphate + H(+). It participates in amino-acid biosynthesis; L-arginine biosynthesis; L-arginine from L-ornithine and carbamoyl phosphate: step 1/3. Reversibly catalyzes the transfer of the carbamoyl group from carbamoyl phosphate (CP) to the N(epsilon) atom of ornithine (ORN) to produce L-citrulline, which is a substrate for argininosuccinate synthetase, the enzyme involved in the final step in arginine biosynthesis. The protein is Ornithine carbamoyltransferase (argF) of Mycobacterium bovis (strain ATCC BAA-935 / AF2122/97).